Consider the following 418-residue polypeptide: UDP-N-acetylglucosamine 1-carboxyvinyltransferase (418 aa).

Position 22-23 (22-23 (KN)) interacts with phosphoenolpyruvate. Arginine 92 contributes to the UDP-N-acetyl-alpha-D-glucosamine binding site. The active-site Proton donor is cysteine 116. Cysteine 116 carries the 2-(S-cysteinyl)pyruvic acid O-phosphothioketal modification. Residues 121 to 125 (RPVDL), aspartate 305, and isoleucine 327 contribute to the UDP-N-acetyl-alpha-D-glucosamine site.

This sequence belongs to the EPSP synthase family. MurA subfamily.

Its subcellular location is the cytoplasm. It catalyses the reaction phosphoenolpyruvate + UDP-N-acetyl-alpha-D-glucosamine = UDP-N-acetyl-3-O-(1-carboxyvinyl)-alpha-D-glucosamine + phosphate. It functions in the pathway cell wall biogenesis; peptidoglycan biosynthesis. Cell wall formation. Adds enolpyruvyl to UDP-N-acetylglucosamine. The polypeptide is UDP-N-acetylglucosamine 1-carboxyvinyltransferase (Acidiphilium cryptum (strain JF-5)).